Reading from the N-terminus, the 280-residue chain is Energy-coupling factor transporter ATP-binding protein EcfA1 (280 aa).

The region spanning 6-241 (LRTENISFQY…SHMLQEIGLD (236 aa)) is the ABC transporter domain. 40 to 47 (GQNGSGKS) lines the ATP pocket.

This sequence belongs to the ABC transporter superfamily. Energy-coupling factor EcfA family. As to quaternary structure, forms a stable energy-coupling factor (ECF) transporter complex composed of 2 membrane-embedded substrate-binding proteins (S component), 2 ATP-binding proteins (A component) and 2 transmembrane proteins (T component).

The protein localises to the cell membrane. Functionally, ATP-binding (A) component of a common energy-coupling factor (ECF) ABC-transporter complex. Unlike classic ABC transporters this ECF transporter provides the energy necessary to transport a number of different substrates. The sequence is that of Energy-coupling factor transporter ATP-binding protein EcfA1 from Bacillus thuringiensis subsp. konkukian (strain 97-27).